The sequence spans 209 residues: Molybdenum cofactor guanylyltransferase (209 aa).

GTP is bound by residues 16-18 (LAG), Lys-28, Asn-56, Asp-69, and Asp-103. Asp-103 contacts Mg(2+).

This sequence belongs to the MobA family. As to quaternary structure, monomer. It depends on Mg(2+) as a cofactor.

It localises to the cytoplasm. It catalyses the reaction Mo-molybdopterin + GTP + H(+) = Mo-molybdopterin guanine dinucleotide + diphosphate. Transfers a GMP moiety from GTP to Mo-molybdopterin (Mo-MPT) cofactor (Moco or molybdenum cofactor) to form Mo-molybdopterin guanine dinucleotide (Mo-MGD) cofactor. This is Molybdenum cofactor guanylyltransferase from Rhizobium johnstonii (strain DSM 114642 / LMG 32736 / 3841) (Rhizobium leguminosarum bv. viciae).